Consider the following 318-residue polypeptide: Deoxymugineic acid synthase 1 (318 aa).

D48 contributes to the NADP(+) binding site. Y53 (proton donor) is an active-site residue. H116 provides a ligand contact to substrate. Residues 162-163 (CN), Q184, 262-270 (FDEARMREN), and 277-285 (ELTEEERQR) contribute to the NADP(+) site.

The protein belongs to the aldo/keto reductase family. As to expression, confined to cells participating in long distance transport (e.g. in the parts of pericycle cells adjacent to the protoxylem and metaxylem) in roots and to vascular bundles in shoots.

It catalyses the reaction 2'-deoxymugineate + NAD(+) = 3''-deamino-3''-oxonicotianamine + NADH + H(+). It carries out the reaction 2'-deoxymugineate + NADP(+) = 3''-deamino-3''-oxonicotianamine + NADPH + H(+). It functions in the pathway siderophore biosynthesis. Its function is as follows. Catalyzes the reduction of a 3''-keto intermediate during the biosynthesis of 2'-deoxymugineic acid (DMA) from L-Met. Involved in the formation of phytosiderophores (MAs) belonging to the mugineic acid family and required to acquire iron. The polypeptide is Deoxymugineic acid synthase 1 (Oryza sativa subsp. japonica (Rice)).